Reading from the N-terminus, the 361-residue chain is Peptide chain release factor 1 (361 aa).

The residue at position 235 (Q235) is an N5-methylglutamine. The interval 287-309 (QKEASAMRSAQVGSGDRSERIRT) is disordered.

This sequence belongs to the prokaryotic/mitochondrial release factor family. In terms of processing, methylated by PrmC. Methylation increases the termination efficiency of RF1.

It is found in the cytoplasm. Its function is as follows. Peptide chain release factor 1 directs the termination of translation in response to the peptide chain termination codons UAG and UAA. The protein is Peptide chain release factor 1 of Chlamydia caviae (strain ATCC VR-813 / DSM 19441 / 03DC25 / GPIC) (Chlamydophila caviae).